A 390-amino-acid polypeptide reads, in one-letter code: Telobox protein 1 (390 aa).

Residues 30–57 form a disordered region; sequence ENPSKREVAQDVPGFERKPTKVRKPRVK. Residues 32 to 48 are compositionally biased toward basic and acidic residues; the sequence is PSKREVAQDVPGFERKP. 2 consecutive HTH myb-type domains span residues 50–109 and 135–193; these read KVRK…PEDY and STRK…PERY. Residues 78–105 constitute a DNA-binding region (H-T-H motif); the sequence is WKKILLDERFHFTNRSPNDLKDRFRTIL. The disordered stretch occupies residues 115–143; it reads NAKTHMGRPQKIPHTVGLSKSTRKERKQF. Residues 162 to 189 constitute a DNA-binding region (H-T-H motif); that stretch reads WTRISKDANLGLQNRRSTDLRDRFRNAF. Composition is skewed to polar residues over residues 244-257 and 322-340; these read SNPNASPQQTTEQP and ISPSTSQNSVQPFPFSIQQ. Disordered stretches follow at residues 244–278 and 316–390; these read SNPNASPQQTTEQPASDELLDWPHHNLPSQFFTSQ and QPPS…DNRG. The span at 347–360 shows a compositional bias: low complexity; sequence PPLSSNTLNSSTLP.

It is found in the nucleus. Its function is as follows. General transcription factor with prominent roles in controlling histone levels and stability. Binds and regulates the activities of many promoters, including those controlling the expression of all four types of canonical histones. Is also involved in the centromeric loading of cnp1 and maintenance of centromere identity. Moreover, regulates the expression of cdc2, a protease capable of histone clipping. The sequence is that of Telobox protein 1 from Schizosaccharomyces pombe (strain 972 / ATCC 24843) (Fission yeast).